A 504-amino-acid polypeptide reads, in one-letter code: uncharacterized protein (504 aa).

The interval 431-483 is disordered; the sequence is GEAEKYRKLQDGDEDEEGTGKPEPKKARRKGFGGKFAPKHEEKVTRAVGVNSE.

The protein belongs to the CBF/MAK21 family.

This is an uncharacterized protein from Caenorhabditis elegans.